A 289-amino-acid polypeptide reads, in one-letter code: Inorganic pyrophosphatase (289 aa).

Diphosphate is bound at residue arginine 80. Mg(2+) is bound by residues aspartate 117, aspartate 122, and aspartate 154.

Belongs to the PPase family. In terms of assembly, homodimer. Requires Mg(2+) as cofactor.

It localises to the cytoplasm. The enzyme catalyses diphosphate + H2O = 2 phosphate + H(+). The polypeptide is Inorganic pyrophosphatase (ppa1) (Schizosaccharomyces pombe (strain 972 / ATCC 24843) (Fission yeast)).